The sequence spans 206 residues: MLKKINFIDINWNKVDNMLPVVIQHNLSGKVLMHGYMNQEALKRTQNEGIVTFYSRTKQRLWTKGETSKNFLYVTDIRLDCDQDALLIFVRPVGKTCHLNHVSCFQVPSENLFFLHDLDCMLKFKKHYGLENSYTFNLHKNGVNRIAQKVAEEAIETAISAVSKNKVELINESSDLVYHLLVLLHSYDLDLYDVIKNLKMRSNKQV.

Residues 1-114 form a phosphoribosyl-AMP cyclohydrolase region; the sequence is MLKKINFIDI…FQVPSENLFF (114 aa). Residues 115–206 form a phosphoribosyl-ATP pyrophosphohydrolase region; sequence LHDLDCMLKF…NLKMRSNKQV (92 aa).

In the N-terminal section; belongs to the PRA-CH family. This sequence in the C-terminal section; belongs to the PRA-PH family.

It is found in the cytoplasm. It carries out the reaction 1-(5-phospho-beta-D-ribosyl)-ATP + H2O = 1-(5-phospho-beta-D-ribosyl)-5'-AMP + diphosphate + H(+). It catalyses the reaction 1-(5-phospho-beta-D-ribosyl)-5'-AMP + H2O = 1-(5-phospho-beta-D-ribosyl)-5-[(5-phospho-beta-D-ribosylamino)methylideneamino]imidazole-4-carboxamide. The protein operates within amino-acid biosynthesis; L-histidine biosynthesis; L-histidine from 5-phospho-alpha-D-ribose 1-diphosphate: step 2/9. It participates in amino-acid biosynthesis; L-histidine biosynthesis; L-histidine from 5-phospho-alpha-D-ribose 1-diphosphate: step 3/9. In Buchnera aphidicola subsp. Baizongia pistaciae (strain Bp), this protein is Histidine biosynthesis bifunctional protein HisIE (hisI).